Here is a 300-residue protein sequence, read N- to C-terminus: MDNVAIKGSLVAIVTPMHENGELDLERFQSLIDFHVTEGTDGIVVVGTTGESPTVDFEEHHLLIKTAVEQAAGRVPVIAGTGANSTREAIDLSIYAKNAGADASLSVVPYYNKPTQEGLYQHFRAVAEAVDIPQILYNVPGRTVADIANDTVLRLAQIPNIVGIKDATGDIGRGFDLLCRAPEDFAIYSGDDASALALLLLGGHGVISVTANVAPKLMHEMCIAAFAGDLAAARAANRKLLRLHLDLFIEANPIPVKWAVAQMGLIGEGLRLPLTPLSNRYHQTLREAMSEAGIDLAISV.

Thr-49 serves as a coordination point for pyruvate. The active-site Proton donor/acceptor is Tyr-137. Lys-165 serves as the catalytic Schiff-base intermediate with substrate. Ile-207 serves as a coordination point for pyruvate.

Belongs to the DapA family. Homotetramer; dimer of dimers.

It localises to the cytoplasm. It catalyses the reaction L-aspartate 4-semialdehyde + pyruvate = (2S,4S)-4-hydroxy-2,3,4,5-tetrahydrodipicolinate + H2O + H(+). Its pathway is amino-acid biosynthesis; L-lysine biosynthesis via DAP pathway; (S)-tetrahydrodipicolinate from L-aspartate: step 3/4. Its function is as follows. Catalyzes the condensation of (S)-aspartate-beta-semialdehyde [(S)-ASA] and pyruvate to 4-hydroxy-tetrahydrodipicolinate (HTPA). The protein is 4-hydroxy-tetrahydrodipicolinate synthase of Nitrosospira multiformis (strain ATCC 25196 / NCIMB 11849 / C 71).